The sequence spans 374 residues: MAANDRATTPGKSGQGTGNEALMRASLSAVAPGMALRDGLERILRGNTGGLIVLGMDKTVESMCTGGFVLDVEFTATRLRELCKLDGALILDKDMTKILRAGVQLVPDASIHTEETGTRHRTADRVSKACGFPVVSVSQSMRLIALYVDGERRVLEESSAILSRANQALATLERYKLRLDEVAGTLSALEIEDLVTVRDVTAVAQRLEMVRRIATEIAEYVVELGTDGRLLSLQLDELIAGVEPERELVVRDYVPEPTAKRSRTVAEALTELDALSHTELLELPVVARALGYSGSPETLDSAVSPRGFRLLAKVPRLPGAIIERLVEHFGGLQKLLAASVDDLQTVDGVGEARARSVREGLSRLAESSILERYV.

The region spanning 20-158 (EALMRASLSA…DGERRVLEES (139 aa)) is the DAC domain. ATP contacts are provided by residues Gly-87, Leu-105, and 118–122 (TRHRT).

It belongs to the DisA family. As to quaternary structure, homooctamer. It depends on Mg(2+) as a cofactor.

The enzyme catalyses 2 ATP = 3',3'-c-di-AMP + 2 diphosphate. Functionally, participates in a DNA-damage check-point that is active prior to asymmetric division when DNA is damaged. DisA forms globular foci that rapidly scan along the chromosomes during sporulation, searching for lesions. When a lesion is present, DisA pauses at the lesion site. This triggers a cellular response that culminates in a temporary block in sporulation initiation. In terms of biological role, also has diadenylate cyclase activity, catalyzing the condensation of 2 ATP molecules into cyclic di-AMP (c-di-AMP). c-di-AMP acts as a signaling molecule that couples DNA integrity with progression of sporulation. The rise in c-di-AMP level generated by DisA while scanning the chromosome, operates as a positive signal that advances sporulation; upon encountering a lesion, the DisA focus arrests at the damaged site and halts c-di-AMP synthesis. The polypeptide is DNA integrity scanning protein DisA (Streptomyces griseus subsp. griseus (strain JCM 4626 / CBS 651.72 / NBRC 13350 / KCC S-0626 / ISP 5235)).